Reading from the N-terminus, the 223-residue chain is ATP-dependent dethiobiotin synthetase BioD (223 aa).

Residue Thr16 coordinates Mg(2+). Lys37 is an active-site residue. Residue Ser41 participates in substrate binding. The Mg(2+) site is built by Asp50 and Glu111. ATP-binding positions include Asp50, Glu111 to Gly114, and Asn171 to Arg172.

This sequence belongs to the dethiobiotin synthetase family. In terms of assembly, homodimer. Mg(2+) serves as cofactor.

The protein resides in the cytoplasm. The catalysed reaction is (7R,8S)-7,8-diammoniononanoate + CO2 + ATP = (4R,5S)-dethiobiotin + ADP + phosphate + 3 H(+). The protein operates within cofactor biosynthesis; biotin biosynthesis; biotin from 7,8-diaminononanoate: step 1/2. Its function is as follows. Catalyzes a mechanistically unusual reaction, the ATP-dependent insertion of CO2 between the N7 and N8 nitrogen atoms of 7,8-diaminopelargonic acid (DAPA, also called 7,8-diammoniononanoate) to form a ureido ring. The chain is ATP-dependent dethiobiotin synthetase BioD from Anaeromyxobacter sp. (strain K).